A 264-amino-acid polypeptide reads, in one-letter code: Diphthine synthase (264 aa).

Residues L9, D84, V87, 112 to 113, L164, A207, and H232 contribute to the S-adenosyl-L-methionine site; that span reads SI.

It belongs to the diphthine synthase family. In terms of assembly, homodimer.

The catalysed reaction is 2-[(3S)-amino-3-carboxypropyl]-L-histidyl-[translation elongation factor 2] + 3 S-adenosyl-L-methionine = diphthine-[translation elongation factor 2] + 3 S-adenosyl-L-homocysteine + 3 H(+). It functions in the pathway protein modification; peptidyl-diphthamide biosynthesis. S-adenosyl-L-methionine-dependent methyltransferase that catalyzes the trimethylation of the amino group of the modified target histidine residue in translation elongation factor 2 (EF-2), to form an intermediate called diphthine. The three successive methylation reactions represent the second step of diphthamide biosynthesis. This is Diphthine synthase from Methanothermobacter thermautotrophicus (strain ATCC 29096 / DSM 1053 / JCM 10044 / NBRC 100330 / Delta H) (Methanobacterium thermoautotrophicum).